We begin with the raw amino-acid sequence, 334 residues long: 6-phosphogluconolactonase (334 aa).

This sequence belongs to the cycloisomerase 2 family.

The catalysed reaction is 6-phospho-D-glucono-1,5-lactone + H2O = 6-phospho-D-gluconate + H(+). Its pathway is carbohydrate degradation; pentose phosphate pathway; D-ribulose 5-phosphate from D-glucose 6-phosphate (oxidative stage): step 2/3. Functionally, catalyzes the hydrolysis of 6-phosphogluconolactone to 6-phosphogluconate. The polypeptide is 6-phosphogluconolactonase (Yersinia pseudotuberculosis serotype IB (strain PB1/+)).